Consider the following 492-residue polypeptide: Bifunctional purine biosynthesis protein PurH (492 aa).

Residues 1 to 144 (MKKAILSVSN…KNFKHVITVV (144 aa)) enclose the MGS-like domain.

The protein belongs to the PurH family.

It catalyses the reaction (6R)-10-formyltetrahydrofolate + 5-amino-1-(5-phospho-beta-D-ribosyl)imidazole-4-carboxamide = 5-formamido-1-(5-phospho-D-ribosyl)imidazole-4-carboxamide + (6S)-5,6,7,8-tetrahydrofolate. The enzyme catalyses IMP + H2O = 5-formamido-1-(5-phospho-D-ribosyl)imidazole-4-carboxamide. It participates in purine metabolism; IMP biosynthesis via de novo pathway; 5-formamido-1-(5-phospho-D-ribosyl)imidazole-4-carboxamide from 5-amino-1-(5-phospho-D-ribosyl)imidazole-4-carboxamide (10-formyl THF route): step 1/1. Its pathway is purine metabolism; IMP biosynthesis via de novo pathway; IMP from 5-formamido-1-(5-phospho-D-ribosyl)imidazole-4-carboxamide: step 1/1. The polypeptide is Bifunctional purine biosynthesis protein PurH (Staphylococcus saprophyticus subsp. saprophyticus (strain ATCC 15305 / DSM 20229 / NCIMB 8711 / NCTC 7292 / S-41)).